The sequence spans 470 residues: MAGENHQWQGSILYNMLMSAKQTRAAPEAPETRLVDQCWGCSCGDEPGVGREGLLGGRNVSLLYRCCFCGKDHPRQGSILYSMLTNAKQTYAAPKAPEATLGPCWGCSCGSDPGVGRTGLPGGRPVALLYRCCFCGEDHPRQGSILYSLLTSAKQTHVAPAAPEARPGGAWWDRSYFAQRPGGREALPGGRAMGLLYRCCFCGEDHPQQGSTLYCMPTSTNQAQAAPEERPRAPWWDTSSGALRPVALKNPQVVCEAASAGLLKTLRFVKYLPCFQVLPLDQQLVLVRNCWASLLMLELAQDRLQFETVEVSEPSMLQKILTTRRRETGGDEPLPVPTLQHHLAPPAEARKVPSASQVQAIKCFLSKCWSLNISTKEYAYLKGTVLFNPDVPGLQCVKYIQGLQWGTQQILSEHTRMTHQGPHDRFIELNSTLFLLRFINANVIAELFFRPIIGTVSMDDMMLEMLCTKL.

3 repeat units span residues 1-67 (MAGE…YRCC), 68-133 (FCGK…YRCC), and 134-200 (FCGE…YRCC). Positions 1–253 (MAGENHQWQG…RPVALKNPQV (253 aa)) are 4 X 67 AA tandem repeats. Short sequence motifs (LXXLL motif) lie at residues 13–17 (LYNML), 80–84 (LYSML), and 146–150 (LYSLL). The stretch at 201–253 (FCGEDHPQQGSTLYCMPTSTNQAQAAPEERPRAPWWDTSSGALRPVALKNPQV) is one 4; truncated repeat. Residues 205–469 (DHPQQGSTLY…DMMLEMLCTK (265 aa)) enclose the NR LBD domain. Positions 461-466 (MMLEML) match the AF-2 motif motif.

It belongs to the nuclear hormone receptor family. NR0 subfamily. As to quaternary structure, homodimer. Interacts with NR5A1, NR5A2, NR0B2 and with COPS2. Interacts with ESRRB; represses ESRRB activity at the GATA6 promoter.

It localises to the nucleus. The protein localises to the cytoplasm. Its function is as follows. Nuclear receptor that lacks a DNA-binding domain and acts as a corepressor that inhibits the transcriptional activity of other nuclear receptors through heterodimeric interactions. Component of a cascade required for the development of the hypothalamic-pituitary-adrenal-gonadal axis. May also have a role in the development of the embryo and in the maintenance of embryonic stem cell pluripotency. The chain is Nuclear receptor subfamily 0 group B member 1 (NR0B1) from Macaca mulatta (Rhesus macaque).